Consider the following 284-residue polypeptide: RNase adapter protein RapZ (284 aa).

8 to 15 is a binding site for ATP; sequence GRSGSGKS. 56–59 contacts GTP; sequence DVRN. The interval 266–284 is RNA-binding; it reads RSRGKNVQSRHRTLEKRKS.

It belongs to the RapZ-like family. RapZ subfamily. Homotrimer.

Modulates the synthesis of GlmS, by affecting the processing and stability of the regulatory small RNA GlmZ. When glucosamine-6-phosphate (GlcN6P) concentrations are high in the cell, RapZ binds GlmZ and targets it to cleavage by RNase E. Consequently, GlmZ is inactivated and unable to activate GlmS synthesis. Under low GlcN6P concentrations, RapZ is sequestered and inactivated by an other regulatory small RNA, GlmY, preventing GlmZ degradation and leading to synthesis of GlmS. The protein is RNase adapter protein RapZ of Klebsiella oxytoca.